We begin with the raw amino-acid sequence, 312 residues long: MSHSNNFYRLETRLQSQTGKAIGDFGMIEDGDTVLVCMSGGKDSYTMLSVLMALQKRAPIQFKLIAMNLDQKQPGFPEHVLPEYLKSTGVEYVIVEADTYSIVKEKVPEGKTTCSLCSRLRRGVIYRTAKELGANKIALGHHRDDIVNTFFLNMFFGGKMKAMPPKLATDDGAHIVIRPLAYCSEKDIAAYARAMEFPIIPCNLCGSQENLQRKKVSEMLQAWERENPGRIDNIFASLRNVVPSHLADTDLFPFTGLATGLAKVDEASLFGETTFTQQPLVFAGSSDENRLEFVRFERPPQTSATVQQASIE.

Positions 39–44 (SGGKDS) match the PP-loop motif motif. [4Fe-4S] cluster contacts are provided by Cys-114, Cys-117, and Cys-205.

Belongs to the TtcA family. In terms of assembly, homodimer. Mg(2+) serves as cofactor. Requires [4Fe-4S] cluster as cofactor.

It localises to the cytoplasm. The enzyme catalyses cytidine(32) in tRNA + S-sulfanyl-L-cysteinyl-[cysteine desulfurase] + AH2 + ATP = 2-thiocytidine(32) in tRNA + L-cysteinyl-[cysteine desulfurase] + A + AMP + diphosphate + H(+). It participates in tRNA modification. Catalyzes the ATP-dependent 2-thiolation of cytidine in position 32 of tRNA, to form 2-thiocytidine (s(2)C32). The sulfur atoms are provided by the cysteine/cysteine desulfurase (IscS) system. This chain is tRNA-cytidine(32) 2-sulfurtransferase, found in Cupriavidus pinatubonensis (strain JMP 134 / LMG 1197) (Cupriavidus necator (strain JMP 134)).